Consider the following 186-residue polypeptide: UPF0301 protein Daro_3893 (186 aa).

Belongs to the UPF0301 (AlgH) family.

This chain is UPF0301 protein Daro_3893, found in Dechloromonas aromatica (strain RCB).